Here is a 137-residue protein sequence, read N- to C-terminus: Phosphoribosyl-AMP cyclohydrolase (137 aa).

A Mg(2+)-binding site is contributed by D84. Position 85 (C85) interacts with Zn(2+). Mg(2+)-binding residues include D86 and D88. Positions 101 and 108 each coordinate Zn(2+).

Belongs to the PRA-CH family. Homodimer. Mg(2+) is required as a cofactor. Zn(2+) serves as cofactor.

The protein localises to the cytoplasm. The catalysed reaction is 1-(5-phospho-beta-D-ribosyl)-5'-AMP + H2O = 1-(5-phospho-beta-D-ribosyl)-5-[(5-phospho-beta-D-ribosylamino)methylideneamino]imidazole-4-carboxamide. It participates in amino-acid biosynthesis; L-histidine biosynthesis; L-histidine from 5-phospho-alpha-D-ribose 1-diphosphate: step 3/9. In terms of biological role, catalyzes the hydrolysis of the adenine ring of phosphoribosyl-AMP. The polypeptide is Phosphoribosyl-AMP cyclohydrolase (Chlorobium phaeovibrioides (strain DSM 265 / 1930) (Prosthecochloris vibrioformis (strain DSM 265))).